The primary structure comprises 166 residues: ATP synthase subunit b (166 aa).

A helical transmembrane segment spans residues 7–27 (QFSLGLFILQIILFVGLILLL).

The protein belongs to the ATPase B chain family. F-type ATPases have 2 components, F(1) - the catalytic core - and F(0) - the membrane proton channel. F(1) has five subunits: alpha(3), beta(3), gamma(1), delta(1), epsilon(1). F(0) has three main subunits: a(1), b(2) and c(10-14). The alpha and beta chains form an alternating ring which encloses part of the gamma chain. F(1) is attached to F(0) by a central stalk formed by the gamma and epsilon chains, while a peripheral stalk is formed by the delta and b chains.

The protein localises to the cell inner membrane. In terms of biological role, f(1)F(0) ATP synthase produces ATP from ADP in the presence of a proton or sodium gradient. F-type ATPases consist of two structural domains, F(1) containing the extramembraneous catalytic core and F(0) containing the membrane proton channel, linked together by a central stalk and a peripheral stalk. During catalysis, ATP synthesis in the catalytic domain of F(1) is coupled via a rotary mechanism of the central stalk subunits to proton translocation. Its function is as follows. Component of the F(0) channel, it forms part of the peripheral stalk, linking F(1) to F(0). The chain is ATP synthase subunit b from Flavobacterium psychrophilum (strain ATCC 49511 / DSM 21280 / CIP 103535 / JIP02/86).